The sequence spans 261 residues: Thiazole synthase (261 aa).

The active-site Schiff-base intermediate with DXP is K95. 1-deoxy-D-xylulose 5-phosphate-binding positions include G156, 182-183, and 204-205; these read AG and NT.

This sequence belongs to the ThiG family. In terms of assembly, homotetramer. Forms heterodimers with either ThiH or ThiS.

It localises to the cytoplasm. It carries out the reaction [ThiS sulfur-carrier protein]-C-terminal-Gly-aminoethanethioate + 2-iminoacetate + 1-deoxy-D-xylulose 5-phosphate = [ThiS sulfur-carrier protein]-C-terminal Gly-Gly + 2-[(2R,5Z)-2-carboxy-4-methylthiazol-5(2H)-ylidene]ethyl phosphate + 2 H2O + H(+). It participates in cofactor biosynthesis; thiamine diphosphate biosynthesis. Its function is as follows. Catalyzes the rearrangement of 1-deoxy-D-xylulose 5-phosphate (DXP) to produce the thiazole phosphate moiety of thiamine. Sulfur is provided by the thiocarboxylate moiety of the carrier protein ThiS. In vitro, sulfur can be provided by H(2)S. This is Thiazole synthase from Pectobacterium carotovorum subsp. carotovorum (strain PC1).